Consider the following 238-residue polypeptide: MLCFLRGMAFVPFLLVTWSSAAFIISYVVAVLSGHVNPFLPYISDTGTTPPESGIFGFMINFSAFLGAATMYTRYKIVQKQNQTCYFSTPVFNLVSLVLGLVGCFGMGIVANFQELAVPVVHDGGALLAFVCGVVYTLLQSIISYKSCPQWNSLSTCHIRMVISAVSCAAVIPMIVCASLISITKLEWNPREKDYVYHVVSAICEWTVAFGFIFYFLTFIQDFQSVTLRISTEINGDI.

6 helical membrane passes run 9 to 29 (AFVP…SYVV), 53 to 73 (SGIF…TMYT), 91 to 111 (VFNL…GIVA), 116 to 136 (LAVP…GVVY), 161 to 181 (MVIS…ASLI), and 200 to 220 (VSAI…LTFI).

Belongs to the DRAM/TMEM150 family.

Its subcellular location is the lysosome membrane. In terms of biological role, lysosomal modulator of autophagy that plays a central role in p53/TP53-mediated apoptosis. Not involved in p73/TP73-mediated autophagy. The polypeptide is DNA damage-regulated autophagy modulator protein 1 (DRAM1) (Homo sapiens (Human)).